The following is a 70-amino-acid chain: ATP synthase subunit c (70 aa).

The next 2 helical transmembrane spans lie at 4–24 (IAAGIAMAGAAIGGGVGDGIV) and 47–67 (FIGVGLVEAMPIIAFVVALMV).

Belongs to the ATPase C chain family. As to quaternary structure, F-type ATPases have 2 components, F(1) - the catalytic core - and F(0) - the membrane proton channel. F(1) has five subunits: alpha(3), beta(3), gamma(1), delta(1), epsilon(1). F(0) has three main subunits: a(1), b(2) and c(10-14). The alpha and beta chains form an alternating ring which encloses part of the gamma chain. F(1) is attached to F(0) by a central stalk formed by the gamma and epsilon chains, while a peripheral stalk is formed by the delta and b chains.

It localises to the cell membrane. Its function is as follows. F(1)F(0) ATP synthase produces ATP from ADP in the presence of a proton or sodium gradient. F-type ATPases consist of two structural domains, F(1) containing the extramembraneous catalytic core and F(0) containing the membrane proton channel, linked together by a central stalk and a peripheral stalk. During catalysis, ATP synthesis in the catalytic domain of F(1) is coupled via a rotary mechanism of the central stalk subunits to proton translocation. Key component of the F(0) channel; it plays a direct role in translocation across the membrane. A homomeric c-ring of between 10-14 subunits forms the central stalk rotor element with the F(1) delta and epsilon subunits. The sequence is that of ATP synthase subunit c from Levilactobacillus brevis (strain ATCC 367 / BCRC 12310 / CIP 105137 / JCM 1170 / LMG 11437 / NCIMB 947 / NCTC 947) (Lactobacillus brevis).